A 230-amino-acid polypeptide reads, in one-letter code: 5'-methylthioadenosine/S-adenosylhomocysteine nucleosidase (230 aa).

Glu-12 serves as the catalytic Proton acceptor. Residues Gly-78, Ile-153, and 174-175 (ME) each bind substrate. Asp-198 (proton donor) is an active-site residue.

The protein belongs to the PNP/UDP phosphorylase family. MtnN subfamily.

It catalyses the reaction S-adenosyl-L-homocysteine + H2O = S-(5-deoxy-D-ribos-5-yl)-L-homocysteine + adenine. It carries out the reaction S-methyl-5'-thioadenosine + H2O = 5-(methylsulfanyl)-D-ribose + adenine. The enzyme catalyses 5'-deoxyadenosine + H2O = 5-deoxy-D-ribose + adenine. The protein operates within amino-acid biosynthesis; L-methionine biosynthesis via salvage pathway; S-methyl-5-thio-alpha-D-ribose 1-phosphate from S-methyl-5'-thioadenosine (hydrolase route): step 1/2. In terms of biological role, catalyzes the irreversible cleavage of the glycosidic bond in both 5'-methylthioadenosine (MTA) and S-adenosylhomocysteine (SAH/AdoHcy) to adenine and the corresponding thioribose, 5'-methylthioribose and S-ribosylhomocysteine, respectively. Also cleaves 5'-deoxyadenosine, a toxic by-product of radical S-adenosylmethionine (SAM) enzymes, into 5-deoxyribose and adenine. The protein is 5'-methylthioadenosine/S-adenosylhomocysteine nucleosidase of Shewanella loihica (strain ATCC BAA-1088 / PV-4).